Reading from the N-terminus, the 205-residue chain is Probable GTP-binding protein EngB (205 aa).

An EngB-type G domain is found at 22–194 (ELPEIAFAGR…WESILDLCEI (173 aa)). GTP-binding positions include 30–37 (GRSNVGKS), 57–61 (GRTQL), 75–78 (DLPG), 142–145 (TKAD), and 173–175 (FSA). Mg(2+) is bound by residues Ser-37 and Thr-59.

This sequence belongs to the TRAFAC class TrmE-Era-EngA-EngB-Septin-like GTPase superfamily. EngB GTPase family. Requires Mg(2+) as cofactor.

Its function is as follows. Necessary for normal cell division and for the maintenance of normal septation. This Desulfatibacillum aliphaticivorans protein is Probable GTP-binding protein EngB.